A 384-amino-acid polypeptide reads, in one-letter code: Ribosomal RNA large subunit methyltransferase G (384 aa).

This sequence belongs to the methyltransferase superfamily. RlmG family.

Its subcellular location is the cytoplasm. The enzyme catalyses guanosine(1835) in 23S rRNA + S-adenosyl-L-methionine = N(2)-methylguanosine(1835) in 23S rRNA + S-adenosyl-L-homocysteine + H(+). Specifically methylates the guanine in position 1835 (m2G1835) of 23S rRNA. The protein is Ribosomal RNA large subunit methyltransferase G of Streptomyces griseus subsp. griseus (strain JCM 4626 / CBS 651.72 / NBRC 13350 / KCC S-0626 / ISP 5235).